Reading from the N-terminus, the 83-residue chain is Mu-theraphotoxin-Hhn2l (83 aa).

Residues 1–21 form the signal peptide; the sequence is MKASMFLALAGLVLLFVVGYA. The propeptide occupies 22 to 48; the sequence is SESEEKEFPIELLSKIFAVDVFKGEER. Intrachain disulfides connect C50/C65, C57/C70, and C64/C77. At L81 the chain carries Leucine amide.

It belongs to the neurotoxin 10 (Hwtx-1) family. 15 (Hntx-3) subfamily. Monomer. Expressed by the venom gland.

The protein localises to the secreted. In terms of biological role, lethal neurotoxin. Selectively blocks tetrodotoxin-sensitive voltage-gated sodium channels (Nav). Does not affect tetrodotoxin-resistant voltage-gated sodium channels or calcium channels. This chain is Mu-theraphotoxin-Hhn2l, found in Cyriopagopus hainanus (Chinese bird spider).